Here is a 297-residue protein sequence, read N- to C-terminus: Bifunctional protein FolD 2 (297 aa).

Residues Gly-173 to Ser-175, Ser-198, and Ile-239 each bind NADP(+).

This sequence belongs to the tetrahydrofolate dehydrogenase/cyclohydrolase family. In terms of assembly, homodimer.

The catalysed reaction is (6R)-5,10-methylene-5,6,7,8-tetrahydrofolate + NADP(+) = (6R)-5,10-methenyltetrahydrofolate + NADPH. It catalyses the reaction (6R)-5,10-methenyltetrahydrofolate + H2O = (6R)-10-formyltetrahydrofolate + H(+). It participates in one-carbon metabolism; tetrahydrofolate interconversion. Catalyzes the oxidation of 5,10-methylenetetrahydrofolate to 5,10-methenyltetrahydrofolate and then the hydrolysis of 5,10-methenyltetrahydrofolate to 10-formyltetrahydrofolate. The polypeptide is Bifunctional protein FolD 2 (Sinorhizobium medicae (strain WSM419) (Ensifer medicae)).